The primary structure comprises 305 residues: UDP-3-O-acyl-N-acetylglucosamine deacetylase (305 aa).

Residues H79, H238, and D242 each coordinate Zn(2+). H265 functions as the Proton donor in the catalytic mechanism.

The protein belongs to the LpxC family. Zn(2+) is required as a cofactor.

It carries out the reaction a UDP-3-O-[(3R)-3-hydroxyacyl]-N-acetyl-alpha-D-glucosamine + H2O = a UDP-3-O-[(3R)-3-hydroxyacyl]-alpha-D-glucosamine + acetate. It functions in the pathway glycolipid biosynthesis; lipid IV(A) biosynthesis; lipid IV(A) from (3R)-3-hydroxytetradecanoyl-[acyl-carrier-protein] and UDP-N-acetyl-alpha-D-glucosamine: step 2/6. In terms of biological role, catalyzes the hydrolysis of UDP-3-O-myristoyl-N-acetylglucosamine to form UDP-3-O-myristoylglucosamine and acetate, the committed step in lipid A biosynthesis. This chain is UDP-3-O-acyl-N-acetylglucosamine deacetylase, found in Shigella dysenteriae serotype 1 (strain Sd197).